The chain runs to 113 residues: Large ribosomal subunit protein bL19 (113 aa).

Belongs to the bacterial ribosomal protein bL19 family.

This protein is located at the 30S-50S ribosomal subunit interface and may play a role in the structure and function of the aminoacyl-tRNA binding site. The chain is Large ribosomal subunit protein bL19 from Mycobacterium leprae (strain Br4923).